Reading from the N-terminus, the 233-residue chain is Outer membrane protein MIP (233 aa).

An N-terminal signal peptide occupies residues 1–20; the sequence is MKMKLVTAAVMGLAMSTAMA. Residues 144-233 enclose the PPIase FKBP-type domain; the sequence is SDTVTVEYTG…IHLISVKKSS (90 aa).

This sequence belongs to the FKBP-type PPIase family.

It localises to the cell outer membrane. The enzyme catalyses [protein]-peptidylproline (omega=180) = [protein]-peptidylproline (omega=0). In terms of biological role, essential virulence factor associated with macrophage infectivity. Exhibits PPIase activity. The protein is Outer membrane protein MIP (mip) of Legionella pneumophila (strain Corby).